The following is a 149-amino-acid chain: MKKIAFGCDHVGFILKHEIVAHLVERGVEVIDKGTWSSERTDYPHYASQVALAVAGGEVDGGILICGTGVGISIAANKFAGIRAVVCSEPYSAQLSRQHNDTNVLAFGSRVVGLELAKMIVDAWLGAQYEGGRHQQRVEAITAIEQRRN.

Aspartate 9 to histidine 10 lines the D-ribulose 5-phosphate pocket. Cysteine 66 serves as the catalytic Proton acceptor. D-ribulose 5-phosphate is bound at residue glycine 67–glycine 71. Histidine 99 serves as the catalytic Proton donor. D-ribulose 5-phosphate-binding residues include asparagine 100, arginine 110, arginine 133, and arginine 137.

Belongs to the LacAB/RpiB family. As to quaternary structure, homodimer, and homotetramer.

The enzyme catalyses aldehydo-D-ribose 5-phosphate = D-ribulose 5-phosphate. It catalyses the reaction D-allose 6-phosphate = D-allulose 6-phosphate. The protein operates within carbohydrate degradation; pentose phosphate pathway; D-ribose 5-phosphate from D-ribulose 5-phosphate (non-oxidative stage): step 1/1. Its activity is regulated as follows. Inhibited by iodoacetate and glucose 6-phosphate. In terms of biological role, catalyzes the interconversion of ribulose-5-P and ribose-5-P. It probably also has activity on D-allose 6-phosphate. This chain is Ribose-5-phosphate isomerase B, found in Escherichia coli (strain K12).